Here is a 239-residue protein sequence, read N- to C-terminus: Uridylate kinase (239 aa).

Residue 12–15 participates in ATP binding; it reads KLSG. Residue Gly54 participates in UMP binding. Positions 55 and 59 each coordinate ATP. Residues Asp74 and 135–142 each bind UMP; that span reads TGNPYFTT. 3 residues coordinate ATP: Thr162, Tyr168, and Asp171.

The protein belongs to the UMP kinase family. Homohexamer.

It localises to the cytoplasm. The enzyme catalyses UMP + ATP = UDP + ADP. Its pathway is pyrimidine metabolism; CTP biosynthesis via de novo pathway; UDP from UMP (UMPK route): step 1/1. Its activity is regulated as follows. Inhibited by UTP. In terms of biological role, catalyzes the reversible phosphorylation of UMP to UDP. This is Uridylate kinase from Fusobacterium nucleatum subsp. nucleatum (strain ATCC 25586 / DSM 15643 / BCRC 10681 / CIP 101130 / JCM 8532 / KCTC 2640 / LMG 13131 / VPI 4355).